We begin with the raw amino-acid sequence, 140 residues long: Large-conductance mechanosensitive channel (140 aa).

The next 3 helical transmembrane spans lie at 7-27 (EFAF…GAAF), 30-50 (IITS…FGTV), and 64-84 (GLFV…FLFV).

This sequence belongs to the MscL family. In terms of assembly, homopentamer.

It is found in the cell membrane. Functionally, channel that opens in response to stretch forces in the membrane lipid bilayer. May participate in the regulation of osmotic pressure changes within the cell. This chain is Large-conductance mechanosensitive channel, found in Staphylococcus carnosus (strain TM300).